Reading from the N-terminus, the 268-residue chain is Tryptophan synthase alpha chain (268 aa).

Active-site proton acceptor residues include E49 and D60.

This sequence belongs to the TrpA family. As to quaternary structure, tetramer of two alpha and two beta chains.

It carries out the reaction (1S,2R)-1-C-(indol-3-yl)glycerol 3-phosphate + L-serine = D-glyceraldehyde 3-phosphate + L-tryptophan + H2O. Its pathway is amino-acid biosynthesis; L-tryptophan biosynthesis; L-tryptophan from chorismate: step 5/5. In terms of biological role, the alpha subunit is responsible for the aldol cleavage of indoleglycerol phosphate to indole and glyceraldehyde 3-phosphate. The sequence is that of Tryptophan synthase alpha chain from Mannheimia succiniciproducens (strain KCTC 0769BP / MBEL55E).